A 129-amino-acid chain; its full sequence is Large ribosomal subunit protein eL32 (129 aa).

Belongs to the eukaryotic ribosomal protein eL32 family.

The polypeptide is Large ribosomal subunit protein eL32 (rpl32e) (Methanosarcina acetivorans (strain ATCC 35395 / DSM 2834 / JCM 12185 / C2A)).